A 265-amino-acid chain; its full sequence is Glutamate racemase (265 aa).

Substrate contacts are provided by residues 12-13 (DS) and 44-45 (YG). Cys-75 serves as the catalytic Proton donor/acceptor. 76 to 77 (NT) contributes to the substrate binding site. Cys-186 acts as the Proton donor/acceptor in catalysis. A substrate-binding site is contributed by 187–188 (TH).

This sequence belongs to the aspartate/glutamate racemases family.

It carries out the reaction L-glutamate = D-glutamate. Its pathway is cell wall biogenesis; peptidoglycan biosynthesis. In terms of biological role, provides the (R)-glutamate required for cell wall biosynthesis. This is Glutamate racemase from Pseudomonas putida (strain GB-1).